The primary structure comprises 421 residues: Medium-chain specific acyl-CoA dehydrogenase, mitochondrial (421 aa).

Residues 1 to 25 constitute a mitochondrion transit peptide; sequence MAAALRRGYKVLRSVSHFECRAQHT. Lys69 bears the N6-acetyllysine; alternate mark. Lys69 is modified (N6-succinyllysine; alternate). N6-acetyllysine is present on Lys79. 158–167 contacts FAD; that stretch reads YCVTEPSAGS. Position 167 (Ser167) interacts with octanoyl-CoA. Lys179 is modified (N6-succinyllysine). An FAD-binding site is contributed by 191–193; the sequence is WIT. At Lys212 the chain carries N6-acetyllysine; alternate. At Lys212 the chain carries N6-succinyllysine; alternate. Octanoyl-CoA is bound at residue Ser216. Residues Lys217, Lys259, and Lys271 each carry the N6-acetyllysine; alternate modification. Residues Lys217, Lys259, and Lys271 each carry the N6-succinyllysine; alternate modification. Octanoyl-CoA-binding residues include Asp278 and Arg281. Lys301 is modified (N6-acetyllysine). FAD-binding positions include 306–308 and 316–317; these read RKT and HQ. Residues Arg349 and Thr351 each contribute to the octanoyl-CoA site. Phosphothreonine is present on Thr351. Residue 374–378 participates in FAD binding; that stretch reads QIFGG. Glu401 contacts octanoyl-CoA. The active-site Proton acceptor is Glu401. 402–405 is an FAD binding site; the sequence is GTAQ.

Belongs to the acyl-CoA dehydrogenase family. Homotetramer. Interacts with the heterodimeric electron transfer flavoprotein ETF. Requires FAD as cofactor. Post-translationally, acetylated. Could occur at proximity of the cofactor-binding sites and reduce the catalytic activity. Could be deacetylated by SIRT3.

Its subcellular location is the mitochondrion matrix. The catalysed reaction is a medium-chain 2,3-saturated fatty acyl-CoA + oxidized [electron-transfer flavoprotein] + H(+) = a medium-chain (2E)-enoyl-CoA + reduced [electron-transfer flavoprotein]. It catalyses the reaction pentanoyl-CoA + oxidized [electron-transfer flavoprotein] + H(+) = (2E)-pentenoyl-CoA + reduced [electron-transfer flavoprotein]. It carries out the reaction hexanoyl-CoA + oxidized [electron-transfer flavoprotein] + H(+) = (2E)-hexenoyl-CoA + reduced [electron-transfer flavoprotein]. The enzyme catalyses octanoyl-CoA + oxidized [electron-transfer flavoprotein] + H(+) = (2E)-octenoyl-CoA + reduced [electron-transfer flavoprotein]. The catalysed reaction is decanoyl-CoA + oxidized [electron-transfer flavoprotein] + H(+) = (2E)-decenoyl-CoA + reduced [electron-transfer flavoprotein]. It catalyses the reaction dodecanoyl-CoA + oxidized [electron-transfer flavoprotein] + H(+) = (2E)-dodecenoyl-CoA + reduced [electron-transfer flavoprotein]. It carries out the reaction tetradecanoyl-CoA + oxidized [electron-transfer flavoprotein] + H(+) = (2E)-tetradecenoyl-CoA + reduced [electron-transfer flavoprotein]. The enzyme catalyses oxidized [electron-transfer flavoprotein] + hexadecanoyl-CoA + H(+) = (2E)-hexadecenoyl-CoA + reduced [electron-transfer flavoprotein]. It functions in the pathway lipid metabolism; mitochondrial fatty acid beta-oxidation. Its function is as follows. Medium-chain specific acyl-CoA dehydrogenase is one of the acyl-CoA dehydrogenases that catalyze the first step of mitochondrial fatty acid beta-oxidation, an aerobic process breaking down fatty acids into acetyl-CoA and allowing the production of energy from fats. The first step of fatty acid beta-oxidation consists in the removal of one hydrogen from C-2 and C-3 of the straight-chain fatty acyl-CoA thioester, resulting in the formation of trans-2-enoyl-CoA. Electron transfer flavoprotein (ETF) is the electron acceptor that transfers electrons to the main mitochondrial respiratory chain via ETF-ubiquinone oxidoreductase (ETF dehydrogenase). Among the different mitochondrial acyl-CoA dehydrogenases, medium-chain specific acyl-CoA dehydrogenase acts specifically on acyl-CoAs with saturated 6 to 12 carbons long primary chains. The protein is Medium-chain specific acyl-CoA dehydrogenase, mitochondrial of Rattus norvegicus (Rat).